A 154-amino-acid polypeptide reads, in one-letter code: Transcriptional repressor NrdR (154 aa).

Residues 3 to 34 (CPFCGNVDTQVKDSRPAEDNVAIRRRRFCPAC) fold into a zinc finger. One can recognise an ATP-cone domain in the interval 49–139 (LVVVKSSGRR…VYKNFQAADD (91 aa)).

The protein belongs to the NrdR family. Zn(2+) is required as a cofactor.

In terms of biological role, negatively regulates transcription of bacterial ribonucleotide reductase nrd genes and operons by binding to NrdR-boxes. In Paracoccus denitrificans (strain Pd 1222), this protein is Transcriptional repressor NrdR.